Here is a 212-residue protein sequence, read N- to C-terminus: Ras-related protein Rab-15 (212 aa).

Residues serine 17, glycine 18, valine 19, glycine 20, lysine 21, threonine 22, cysteine 23, serine 35, serine 39, and threonine 40 each contribute to the GTP site. Threonine 22 provides a ligand contact to Mg(2+). Short sequence motifs (switch) lie at residues 31 to 45 and 63 to 80; these read NEFH…GVDF and DTAG…YYRR. Mg(2+)-binding residues include threonine 40 and aspartate 63. Glycine 66, asparagine 121, lysine 122, aspartate 124, serine 151, and alanine 152 together coordinate GTP. Residues 192–212 are disordered; it reads ELEEDEGKPEGPANSSKTCWC. 2 S-geranylgeranyl cysteine lipidation sites follow: cysteine 210 and cysteine 212. Cysteine 212 is subject to Cysteine methyl ester.

This sequence belongs to the small GTPase superfamily. Rab family. As to quaternary structure, the GTP bound form of RAB15 interacts with REP15. Interacts (GTP-bound form) with MICAL1, MICAL3, MICALCL, EHBP1 and EHBP1L1. It depends on Mg(2+) as a cofactor.

It localises to the cell membrane. It catalyses the reaction GTP + H2O = GDP + phosphate + H(+). Regulated by guanine nucleotide exchange factors (GEFs) which promote the exchange of bound GDP for free GTP. Regulated by GTPase activating proteins (GAPs) which increase the GTP hydrolysis activity. Inhibited by GDP dissociation inhibitors (GDIs). In terms of biological role, the small GTPases Rab are key regulators of intracellular membrane trafficking, from the formation of transport vesicles to their fusion with membranes. Rabs cycle between an inactive GDP-bound form and an active GTP-bound form that is able to recruit to membranes different sets of downstream effectors directly responsible for vesicle formation, movement, tethering and fusion. RAB15 may act in concert with RAB3A in regulating aspects of synaptic vesicle membrane flow within the nerve terminal. In Mus musculus (Mouse), this protein is Ras-related protein Rab-15.